Here is a 184-residue protein sequence, read N- to C-terminus: MKIAQEIRAGNVIMNGKDPMVVLKTEYSRGGRNSATVRMKLKSLIANFNTEVVFKADDKIDQVILDKKECTYSYFADPMYICMDTEYNQYEVEAENMGDSLNYLQDGMELEVVFYDGKAISVEVPTSVQREITWTEPAVKGDTSGKVLKPAKLATGFEIGVPIFVAQGDVVEIDTRTGEYRKRV.

It belongs to the elongation factor P family.

It localises to the cytoplasm. The protein operates within protein biosynthesis; polypeptide chain elongation. Its function is as follows. Involved in peptide bond synthesis. Stimulates efficient translation and peptide-bond synthesis on native or reconstituted 70S ribosomes in vitro. Probably functions indirectly by altering the affinity of the ribosome for aminoacyl-tRNA, thus increasing their reactivity as acceptors for peptidyl transferase. This Polaromonas naphthalenivorans (strain CJ2) protein is Elongation factor P.